A 99-amino-acid polypeptide reads, in one-letter code: DNA-directed RNA polymerase subunit omega (99 aa).

This sequence belongs to the RNA polymerase subunit omega family. In terms of assembly, the RNAP catalytic core consists of 2 alpha, 1 beta, 1 beta' and 1 omega subunit. When a sigma factor is associated with the core the holoenzyme is formed, which can initiate transcription.

It carries out the reaction RNA(n) + a ribonucleoside 5'-triphosphate = RNA(n+1) + diphosphate. Functionally, promotes RNA polymerase assembly. Latches the N- and C-terminal regions of the beta' subunit thereby facilitating its interaction with the beta and alpha subunits. This is DNA-directed RNA polymerase subunit omega from Stenotrophomonas maltophilia (strain K279a).